Here is a 563-residue protein sequence, read N- to C-terminus: Lengsin (563 aa).

The disordered stretch occupies residues 1–115 (MTDEGDLAQE…PNTDPTRYNA (115 aa)). A compositionally biased stretch (basic residues) spans 26–37 (SKLRRARRKVTK). Polar residues-rich tracts occupy residues 51 to 62 (ANSSEMSRNQIA) and 105 to 115 (SPNTDPTRYNA). The 95-residue stretch at 137-231 (NHLQFVRFEA…VICDTFTVTG (95 aa)) folds into the GS beta-grasp domain. The region spanning 238-563 (PRYIAKRQLR…EGNKFLEYFI (326 aa)) is the GS catalytic domain.

Belongs to the glutamine synthetase family. As to quaternary structure, dodecamer. Interacts with BFSP2 and VIM. In terms of tissue distribution, expressed in lens.

May act as a component of the cytoskeleton or as a chaperone for the reorganization of intermediate filament proteins during terminal differentiation in the lens. Does not seem to have enzymatic activity. The protein is Lengsin (Lgsn) of Mus musculus (Mouse).